A 306-amino-acid chain; its full sequence is Proteasome subunit beta (306 aa).

Positions M1–G67 are cleaved as a propeptide — removed in mature form; by autocatalysis. The Nucleophile role is filled by T68.

It belongs to the peptidase T1B family. As to quaternary structure, the 20S proteasome core is composed of 14 alpha and 14 beta subunits that assemble into four stacked heptameric rings, resulting in a barrel-shaped structure. The two inner rings, each composed of seven catalytic beta subunits, are sandwiched by two outer rings, each composed of seven alpha subunits. The catalytic chamber with the active sites is on the inside of the barrel. Has a gated structure, the ends of the cylinder being occluded by the N-termini of the alpha-subunits. Is capped by the proteasome-associated ATPase, ARC.

Its subcellular location is the cytoplasm. It carries out the reaction Cleavage of peptide bonds with very broad specificity.. It participates in protein degradation; proteasomal Pup-dependent pathway. With respect to regulation, the formation of the proteasomal ATPase ARC-20S proteasome complex, likely via the docking of the C-termini of ARC into the intersubunit pockets in the alpha-rings, may trigger opening of the gate for substrate entry. Interconversion between the open-gate and close-gate conformations leads to a dynamic regulation of the 20S proteasome proteolysis activity. In terms of biological role, component of the proteasome core, a large protease complex with broad specificity involved in protein degradation. The protein is Proteasome subunit beta of Mycolicibacterium vanbaalenii (strain DSM 7251 / JCM 13017 / BCRC 16820 / KCTC 9966 / NRRL B-24157 / PYR-1) (Mycobacterium vanbaalenii).